We begin with the raw amino-acid sequence, 762 residues long: cGMP-dependent protein kinase 2 (762 aa).

Positions Met-1–Leu-26 are disordered. A lipid anchor (N-myristoyl glycine) is attached at Gly-2. 2 positions are modified to phosphoserine: Ser-110 and Ser-117. A disordered region spans residues Arg-118–Lys-138. Positions Phe-168–Ser-283 are cGMP-binding, high affinity; cAMP-binding, moderate affinity. 3',5'-cyclic GMP is bound by residues Gly-232–Ala-235, Arg-242–Thr-243, Lys-347, Gly-356–Ala-359, Arg-366–Ser-367, Asp-412, and Arg-415. The segment at Leu-286–His-416 is cGMP-binding, high affinity; cAMP-binding, low affinity. Ser-431 carries the phosphoserine modification. One can recognise a Protein kinase domain in the interval Leu-453 to Leu-711. ATP-binding positions include Leu-459–Val-467 and Lys-482. Asp-576 functions as the Proton acceptor in the catalytic mechanism. Thr-609 bears the Phosphothreonine mark. The AGC-kinase C-terminal domain maps to Asn-712 to Phe-762. Residues Tyr-740 to Phe-762 form a disordered region.

It belongs to the protein kinase superfamily. AGC Ser/Thr protein kinase family. cGMP subfamily. Interacts with GRIA1/GLUR1. Myristoylation mediates membrane localization.

The protein resides in the apical cell membrane. It localises to the cell membrane. The enzyme catalyses L-seryl-[protein] + ATP = O-phospho-L-seryl-[protein] + ADP + H(+). The catalysed reaction is L-threonyl-[protein] + ATP = O-phospho-L-threonyl-[protein] + ADP + H(+). Binding of cGMP results in enzyme activation. Functionally, crucial regulator of intestinal secretion and bone growth. Phosphorylates and activates CFTR on the plasma membrane. Plays a key role in intestinal secretion by regulating cGMP-dependent translocation of CFTR in jejunum. Acts downstream of NMDAR to activate the plasma membrane accumulation of GRIA1/GLUR1 in synapse and increase synaptic plasticity. Phosphorylates GRIA1/GLUR1 at Ser-863. Acts as a regulator of gene expression and activator of the extracellular signal-regulated kinases MAPK3/ERK1 and MAPK1/ERK2 in mechanically stimulated osteoblasts. Under fluid shear stress, mediates ERK activation and subsequent induction of FOS, FOSL1/FRA1, FOSL2/FRA2 and FOSB that play a key role in the osteoblast anabolic response to mechanical stimulation. The sequence is that of cGMP-dependent protein kinase 2 (Prkg2) from Mus musculus (Mouse).